The following is a 118-amino-acid chain: Non-specific lipid-transfer protein 5 (118 aa).

The signal sequence occupies residues 1–25; it reads MEGLLKLSTLVIVCMLVTAPMASEA. Intrachain disulfides connect C29–C76, C39–C53, C54–C100, and C74–C114.

This sequence belongs to the plant LTP family.

Functionally, plant non-specific lipid-transfer proteins transfer phospholipids as well as galactolipids across membranes. May play a role in wax or cutin deposition in the cell walls of expanding epidermal cells and certain secretory tissues. The protein is Non-specific lipid-transfer protein 5 (LTP5) of Arabidopsis thaliana (Mouse-ear cress).